We begin with the raw amino-acid sequence, 1883 residues long: Nuclear pore complex protein Nup153 (1883 aa).

Positions Met1–Lys17 are enriched in basic and acidic residues. Disordered stretches follow at residues Met1 to Gly57, Ser70 to Met116, Ala176 to Glu227, Arg400 to Ser439, Arg498 to Tyr518, Pro580 to Ser604, Met627 to Arg657, Thr694 to Ile769, and Val791 to Thr812. Acidic residues predominate over residues Glu29 to Ser41. The segment covering Gly73–Asn101 has biased composition (polar residues). Positions Thr105–Ile115 are enriched in basic residues. Over residues Gly182–Glu209 the composition is skewed to acidic residues. Over residues Asn420–Arg433 the composition is skewed to basic and acidic residues. The segment covering Arg498–Ser515 has biased composition (low complexity). Residues Asp582–Val591 are compositionally biased toward polar residues. The span at Met627–Ser636 shows a compositional bias: basic and acidic residues. Composition is skewed to polar residues over residues Ser637–Arg657 and Thr694–Val706. Residues His736–Thr748 show a composition bias toward basic residues. A compositionally biased stretch (low complexity) spans Ser802–Thr812. RanBP2-type zinc fingers lie at residues Ser903 to Val932, Lys962 to Thr993, Lys1009 to Gly1038, Lys1067 to Ser1097, and Lys1126 to Gln1155. The Zn(2+) site is built by Cys909, Cys912, Cys923, Cys926, Cys970, Cys973, Cys984, Cys987, Cys1015, Cys1018, Cys1029, Cys1032, Cys1074, Cys1077, Cys1088, and Cys1091. The interval Ser1173–Ser1197 is disordered. The segment at Lys1237–Glu1266 adopts a RanBP2-type 6 zinc-finger fold. 22 repeat units span residues Phe1287 to Gly1288, Phe1315 to Gly1316, Phe1317 to Gly1318, Phe1340 to Gly1341, Phe1353 to Gly1354, Phe1415 to Gly1416, Phe1469 to Gly1470, Phe1511 to Gly1512, Phe1528 to Gly1529, Phe1548 to Gly1549, Phe1586 to Gly1587, Phe1599 to Gly1600, Phe1613 to Gly1614, Phe1647 to Gly1648, Phe1653 to Gly1654, Phe1672 to Gly1673, Phe1694 to Gly1695, Phe1724 to Gly1725, Phe1737 to Gly1738, Phe1748 to Gly1749, Phe1768 to Gly1769, and Phe1785 to Gly1786. The tract at residues Phe1287 to Gly1786 is 22 X 2 AA repeats of F-G. Residues Glu1301–Gly1323 show a composition bias toward polar residues. Positions Glu1301–Lys1331 are disordered. Residues Ser1449–Ser1473 are disordered. Residues Thr1597–Ser1616 are disordered. Residues Asn1855 to Arg1883 form a disordered region. The segment covering Ala1869–Arg1883 has biased composition (basic residues).

It belongs to the NUP153 family. As to quaternary structure, part of the nuclear pore complex (NPC). Associates with male-specific lethal (MSL) histone acetyltransferase complex. Zn(2+) serves as cofactor. Expressed in adult male accessory glands (at protein level).

Its subcellular location is the nucleus. The protein localises to the nucleus membrane. The protein resides in the nuclear pore complex. It localises to the chromosome. It is found in the cytoplasm. Its subcellular location is the cytoskeleton. The protein localises to the spindle. Its function is as follows. Component of the nuclear pore complex (NPC), a complex required for the trafficking across the nuclear envelope. Functions as a scaffolding element in the nuclear phase of the NPC. Essential for the nuclear import of nuclear localization signal (NLS)-containing proteins in a Importin alpha/Importin beta receptor-dependent manner. Required for nuclear import of Mad. Plays a role in chromosomal organization and gene expression regulation; stimulates transcription by promoting the formation of an open chromatin environment. Binds chromatin to nucleoporin-associated regions (NARs) that define transcriptionally active regions of the genome. Associates with extended chromosomal regions that alternate between domains of high density binding with those of low occupancy. Preferentially binds to NARs of the male X chromosome. In males, together with Mgtor, required for the localization of the male-specific lethal (MSL) histone acetyltransferase complex to the X chromosome and therefore for the transcription of dosage compensation genes. May play a role in double strand break DNA repair. The sequence is that of Nuclear pore complex protein Nup153 (Nup153) from Drosophila melanogaster (Fruit fly).